Consider the following 539-residue polypeptide: Chaperonin GroEL (539 aa).

ATP is bound by residues 30 to 33, lysine 51, 87 to 91, glycine 415, 479 to 481, and aspartate 495; these read TLGP, DGTTT, and NAA.

The protein belongs to the chaperonin (HSP60) family. As to quaternary structure, forms a cylinder of 14 subunits composed of two heptameric rings stacked back-to-back. Interacts with the co-chaperonin GroES.

The protein localises to the cytoplasm. The enzyme catalyses ATP + H2O + a folded polypeptide = ADP + phosphate + an unfolded polypeptide.. Functionally, together with its co-chaperonin GroES, plays an essential role in assisting protein folding. The GroEL-GroES system forms a nano-cage that allows encapsulation of the non-native substrate proteins and provides a physical environment optimized to promote and accelerate protein folding. The polypeptide is Chaperonin GroEL (Enterobacter asburiae).